A 372-amino-acid chain; its full sequence is Cytochrome b (372 aa).

The next 4 helical transmembrane spans lie at 32–52, 77–99, 114–134, and 180–200; these read LGFN…CLSW, FIIR…IHII, VWFF…IGYT, and LHSI…AHFF. H83 and H97 together coordinate heme b. 2 residues coordinate heme b: H184 and H198. H203 is an a ubiquinone binding site. Transmembrane regions (helical) follow at residues 228-248, 297-317, 330-350, and 351-371; these read YYLR…YYIC, LLFV…LIFI, LVLF…VLCF, and PLWM…VCRL.

This sequence belongs to the cytochrome b family. The main subunits of complex b-c1 are: cytochrome b, cytochrome c1 and the Rieske protein. It depends on heme b as a cofactor.

The protein resides in the mitochondrion inner membrane. Component of the ubiquinol-cytochrome c reductase complex (complex III or cytochrome b-c1 complex) that is part of the mitochondrial respiratory chain. The b-c1 complex mediates electron transfer from ubiquinol to cytochrome c. Contributes to the generation of a proton gradient across the mitochondrial membrane that is then used for ATP synthesis. The sequence is that of Cytochrome b (MT-CYB) from Trypanoplasma borreli.